Consider the following 369-residue polypeptide: 1-aminocyclopropane-1-carboxylate oxidase homolog 2 (369 aa).

Residues 217–318 (KGLRMLCHYF…VSVACFFHTH (102 aa)) form the Fe2OG dioxygenase domain. Residues His241, Asp243, and His297 each coordinate Fe cation.

It belongs to the iron/ascorbate-dependent oxidoreductase family. It depends on Fe cation as a cofactor.

This Arabidopsis thaliana (Mouse-ear cress) protein is 1-aminocyclopropane-1-carboxylate oxidase homolog 2.